A 508-amino-acid polypeptide reads, in one-letter code: ADP-ribosylarginine hydrolase CG3568 (508 aa).

Residues R209, G349, G351, G353, V354, W355, W390, D441, N448, E449, G459, and D460 each contribute to the ADP-D-ribose site.

It carries out the reaction N(omega)-(ADP-D-ribosyl)-L-arginyl-[protein] + H2O = ADP-D-ribose + L-arginyl-[protein]. The catalysed reaction is N(omega)-(ADP-D-ribosyl)-L-arginine + H2O = ADP-D-ribose + L-arginine. Protein ADP-ribosyl hydrolase that specifically removes mono-ADP-ribosyl modifications from protein arginine residues. The sequence is that of ADP-ribosylarginine hydrolase CG3568 from Drosophila melanogaster (Fruit fly).